The chain runs to 316 residues: Probable 5-dehydro-4-deoxyglucarate dehydratase (316 aa).

This sequence belongs to the DapA family.

The enzyme catalyses 5-dehydro-4-deoxy-D-glucarate + H(+) = 2,5-dioxopentanoate + CO2 + H2O. It participates in carbohydrate acid metabolism; D-glucarate degradation; 2,5-dioxopentanoate from D-glucarate: step 2/2. The chain is Probable 5-dehydro-4-deoxyglucarate dehydratase from Corynebacterium glutamicum (strain ATCC 13032 / DSM 20300 / JCM 1318 / BCRC 11384 / CCUG 27702 / LMG 3730 / NBRC 12168 / NCIMB 10025 / NRRL B-2784 / 534).